A 98-amino-acid polypeptide reads, in one-letter code: Aspartyl/glutamyl-tRNA(Asn/Gln) amidotransferase subunit C (98 aa).

It belongs to the GatC family. In terms of assembly, heterotrimer of A, B and C subunits.

The enzyme catalyses L-glutamyl-tRNA(Gln) + L-glutamine + ATP + H2O = L-glutaminyl-tRNA(Gln) + L-glutamate + ADP + phosphate + H(+). The catalysed reaction is L-aspartyl-tRNA(Asn) + L-glutamine + ATP + H2O = L-asparaginyl-tRNA(Asn) + L-glutamate + ADP + phosphate + 2 H(+). Its function is as follows. Allows the formation of correctly charged Asn-tRNA(Asn) or Gln-tRNA(Gln) through the transamidation of misacylated Asp-tRNA(Asn) or Glu-tRNA(Gln) in organisms which lack either or both of asparaginyl-tRNA or glutaminyl-tRNA synthetases. The reaction takes place in the presence of glutamine and ATP through an activated phospho-Asp-tRNA(Asn) or phospho-Glu-tRNA(Gln). This chain is Aspartyl/glutamyl-tRNA(Asn/Gln) amidotransferase subunit C, found in Microcystis aeruginosa (strain NIES-843 / IAM M-2473).